The sequence spans 1155 residues: Polarized growth protein rax2 (1155 aa).

The N-terminal stretch at 1–27 is a signal peptide; sequence MAIYSSFWIRLYFTFRFFCYFLTSVVA. Topologically, residues 28–1105 are extracellular; it reads SDVSFLGDFS…KYDHIGQPRY (1078 aa). N-linked (GlcNAc...) asparagine glycosylation is found at N44, N61, N103, N118, N124, N156, N161, N182, N190, N213, N224, N306, N391, N413, N419, N510, N519, N554, N562, N607, N630, N713, N722, N743, N769, N793, N807, N824, N840, N848, N876, N893, N899, N916, N945, N1009, N1030, and N1055. The chain crosses the membrane as a helical span at residues 1106–1126; sequence VVIISLGISIGVMFLIMSGSI. At 1127 to 1155 the chain is on the cytoplasmic side; that stretch reads VVEIIHWFFSEHVETLHDYSNFLKELKTQ.

Belongs to the RAX2 family. Interacts with for3 and tea1.

Its subcellular location is the cell membrane. In terms of biological role, controls cell polarity, through the G1 phase of mitosis, via regulation of for3 localization. Required for actin cable formation where it directs the spatial distribution of the actin cables. The sequence is that of Polarized growth protein rax2 from Schizosaccharomyces pombe (strain 972 / ATCC 24843) (Fission yeast).